Reading from the N-terminus, the 657-residue chain is Tyramine beta-hydroxylase (657 aa).

Residues valine 77–valine 97 traverse the membrane as a helical segment. The DOMON domain maps to threonine 103 to serine 214. Asparagine 104 and asparagine 143 each carry an N-linked (GlcNAc...) asparagine glycan. Tyrosine 278 is an active-site residue. Cystine bridges form between cysteine 280–cysteine 330 and cysteine 319–cysteine 342. 2 residues coordinate Cu(2+): histidine 312 and histidine 313. The Cu(2+) site is built by histidine 380, histidine 458, histidine 460, and methionine 533. 3 cysteine pairs are disulfide-bonded: cysteine 437–cysteine 549, cysteine 441–cysteine 606, and cysteine 512–cysteine 534. Histidine 458 is a catalytic residue. Asparagine 555 carries an N-linked (GlcNAc...) asparagine glycan.

Belongs to the copper type II ascorbate-dependent monooxygenase family. It depends on Cu(2+) as a cofactor. Present in synaptic regions of RIC interneurons. Present in gonadal sheath cells of hermaphrodites (at protein level).

The protein localises to the membrane. It carries out the reaction tyramine + L-ascorbate + O2 = (R)-octopamine + L-dehydroascorbate + H2O. Functionally, required for the conversion of tyramine to octopamine, a precursor of octapamine but probably itself a neurotransmitter. Involved in the regulation of egg laying, which is inhibited by tyramine. Due to its involvement in octopamine biosynthesis, also required for crtc-1-dependent regulation of AMPK-mediated longevity. The polypeptide is Tyramine beta-hydroxylase (Caenorhabditis elegans).